We begin with the raw amino-acid sequence, 295 residues long: MTNVTGTERVKRGMAEMQKGGVIMDVINAEQAKIAEEAGAVAVMALERVPADIRAAGGVSRMADPTIVEEVMGAVSIPVMAKCRIGHLVEARVLESLGVDYIDESEVLTPADEVYHLNKRDYTVPFVCGCRDIGEAARRIAEGASMLRTKGEPGTGNIVEAVRHMRQVNAEIRQVASLREDELMTYAKNTGAPYEVLLEIKRLGRLPVVNFAAGGVATPADAALMMQLGADGVFVGSGIFKSENPAKFARAIVEATTHYEDYELIASLSKGLGNAMKGIEISTLLPEQRMQERGW.

Position 25 (Asp-25) interacts with D-ribose 5-phosphate. Lys-82 serves as the catalytic Schiff-base intermediate with D-ribose 5-phosphate. Gly-154 is a D-ribose 5-phosphate binding site. Arg-166 serves as a coordination point for D-glyceraldehyde 3-phosphate. Residues Gly-215 and 236–237 contribute to the D-ribose 5-phosphate site; that span reads GS.

This sequence belongs to the PdxS/SNZ family. In terms of assembly, in the presence of PdxT, forms a dodecamer of heterodimers.

The enzyme catalyses aldehydo-D-ribose 5-phosphate + D-glyceraldehyde 3-phosphate + L-glutamine = pyridoxal 5'-phosphate + L-glutamate + phosphate + 3 H2O + H(+). The protein operates within cofactor biosynthesis; pyridoxal 5'-phosphate biosynthesis. Functionally, catalyzes the formation of pyridoxal 5'-phosphate from ribose 5-phosphate (RBP), glyceraldehyde 3-phosphate (G3P) and ammonia. The ammonia is provided by the PdxT subunit. Can also use ribulose 5-phosphate and dihydroxyacetone phosphate as substrates, resulting from enzyme-catalyzed isomerization of RBP and G3P, respectively. This Bacillus cereus (strain 03BB102) protein is Pyridoxal 5'-phosphate synthase subunit PdxS.